Consider the following 185-residue polypeptide: uncharacterized protein (185 aa).

2 helical membrane passes run 1–21 (MMKF…LTPE) and 111–131 (FLWI…AFAW).

This sequence to A.aeolicus aq_1900.

It is found in the cell membrane. This is an uncharacterized protein from Aquifex aeolicus (strain VF5).